The chain runs to 726 residues: Catalase-peroxidase (726 aa).

A cross-link (tryptophyl-tyrosyl-methioninium (Trp-Tyr) (with M-234)) is located at residues 85 to 208 (WHSAGSYRIH…FAATEMGLIY (124 aa)). His-86 (proton acceptor) is an active-site residue. The tryptophyl-tyrosyl-methioninium (Tyr-Met) (with W-85) cross-link spans 208-234 (YVNPEGPMGNPDPSGSAKEIRLAFTRM). His-249 serves as a coordination point for heme b.

It belongs to the peroxidase family. Peroxidase/catalase subfamily. As to quaternary structure, homodimer or homotetramer. It depends on heme b as a cofactor. Formation of the three residue Trp-Tyr-Met cross-link is important for the catalase, but not the peroxidase activity of the enzyme.

It catalyses the reaction H2O2 + AH2 = A + 2 H2O. It carries out the reaction 2 H2O2 = O2 + 2 H2O. Its function is as follows. Bifunctional enzyme with both catalase and broad-spectrum peroxidase activity. This Pseudothermotoga lettingae (strain ATCC BAA-301 / DSM 14385 / NBRC 107922 / TMO) (Thermotoga lettingae) protein is Catalase-peroxidase.